A 431-amino-acid chain; its full sequence is Adenylosuccinate synthetase (431 aa).

GTP is bound by residues 12-18 (GDEGKGK) and 40-42 (GHT). Asp-13 (proton acceptor) is an active-site residue. Asp-13 and Gly-40 together coordinate Mg(2+). Residues 13 to 16 (DEGK), 38 to 41 (NAGH), Thr-128, Arg-142, Gln-225, Thr-240, and Arg-304 contribute to the IMP site. The Proton donor role is filled by His-41. Substrate is bound at residue 300 to 306 (TTTGRPR). GTP-binding positions include Arg-306, 332-334 (KLD), and 414-416 (GVG).

The protein belongs to the adenylosuccinate synthetase family. Homodimer. Mg(2+) is required as a cofactor.

The protein localises to the cytoplasm. It catalyses the reaction IMP + L-aspartate + GTP = N(6)-(1,2-dicarboxyethyl)-AMP + GDP + phosphate + 2 H(+). It functions in the pathway purine metabolism; AMP biosynthesis via de novo pathway; AMP from IMP: step 1/2. In terms of biological role, plays an important role in the de novo pathway of purine nucleotide biosynthesis. Catalyzes the first committed step in the biosynthesis of AMP from IMP. The protein is Adenylosuccinate synthetase of Thermomicrobium roseum (strain ATCC 27502 / DSM 5159 / P-2).